Reading from the N-terminus, the 97-residue chain is Large ribosomal subunit protein uL23 (97 aa).

This sequence belongs to the universal ribosomal protein uL23 family. In terms of assembly, part of the 50S ribosomal subunit. Contacts protein L29, and trigger factor when it is bound to the ribosome.

One of the early assembly proteins it binds 23S rRNA. One of the proteins that surrounds the polypeptide exit tunnel on the outside of the ribosome. Forms the main docking site for trigger factor binding to the ribosome. This is Large ribosomal subunit protein uL23 from Allorhizobium ampelinum (strain ATCC BAA-846 / DSM 112012 / S4) (Agrobacterium vitis (strain S4)).